Reading from the N-terminus, the 62-residue chain is Large ribosomal subunit protein bL28 (62 aa).

The protein belongs to the bacterial ribosomal protein bL28 family.

The polypeptide is Large ribosomal subunit protein bL28 (Desulforamulus reducens (strain ATCC BAA-1160 / DSM 100696 / MI-1) (Desulfotomaculum reducens)).